Reading from the N-terminus, the 842-residue chain is Circularly permutated Ras protein 1 (842 aa).

Residues 62–66 (DTAGQ), 121–124 (NKVD), and 181–188 (GGGGVGKS) each bind GTP. Residues 253–274 (SGKDKQPSPQQAASPSTIDRTG) are disordered. Positions 259–274 (PSPQQAASPSTIDRTG) are enriched in polar residues. The VWFA domain maps to 377-627 (IIIYCIDVSG…TQNPMIATDV (251 aa)).

It belongs to the small GTPase superfamily. CpRas family.

This is Circularly permutated Ras protein 1 (cpras1) from Dictyostelium discoideum (Social amoeba).